Reading from the N-terminus, the 416-residue chain is Peroxisomal isocitrate dehydrogenase [NADP] (416 aa).

Residues 77–79 (TIT) and arginine 84 contribute to the NADP(+) site. Residue threonine 79 coordinates substrate. Substrate is bound by residues 96–102 (SPNGTIR), arginine 111, and arginine 134. Position 253 (aspartate 253) interacts with Mn(2+). Lysine 261 is a binding site for NADP(+). Aspartate 276 serves as a coordination point for Mn(2+). Residues 311-316 (GTVTRH) and asparagine 329 each bind NADP(+). A Peroxisomal targeting signal motif is present at residues 414-416 (SRL).

The protein belongs to the isocitrate and isopropylmalate dehydrogenases family. Mg(2+) serves as cofactor. The cofactor is Mn(2+).

Its subcellular location is the peroxisome. It catalyses the reaction D-threo-isocitrate + NADP(+) = 2-oxoglutarate + CO2 + NADPH. In terms of biological role, may be involved in response to oxidative stresses. The protein is Peroxisomal isocitrate dehydrogenase [NADP] (ICDH) of Arabidopsis thaliana (Mouse-ear cress).